The sequence spans 198 residues: Chorion protein S19 (198 aa).

Positions 1–16 (MNKFATLAVFISVCLA) are cleaved as a signal peptide.

It belongs to the chorion protein S19 family.

The protein localises to the secreted. Chorion membrane (egg shell) protein; plays a role in protecting the egg from the environment. This Drosophila virilis (Fruit fly) protein is Chorion protein S19 (Cp19).